The chain runs to 528 residues: GMP synthase [glutamine-hydrolyzing] (528 aa).

Positions 13–204 (AIVILDFGSQ…VYHICGCEPD (192 aa)) constitute a Glutamine amidotransferase type-1 domain. The active-site Nucleophile is the Cys-90. Residues His-178 and Glu-180 contribute to the active site. The region spanning 205 to 403 (WTTTAFIEEA…LGLPEEIVRR (199 aa)) is the GMPS ATP-PPase domain. 232–238 (SGGVDSS) provides a ligand contact to ATP.

In terms of assembly, homodimer.

The catalysed reaction is XMP + L-glutamine + ATP + H2O = GMP + L-glutamate + AMP + diphosphate + 2 H(+). It functions in the pathway purine metabolism; GMP biosynthesis; GMP from XMP (L-Gln route): step 1/1. Its function is as follows. Catalyzes the synthesis of GMP from XMP. This is GMP synthase [glutamine-hydrolyzing] from Prochlorococcus marinus (strain MIT 9303).